Consider the following 146-residue polypeptide: UPF0735 ACT domain-containing protein Teth514_2312 (146 aa).

The region spanning 71–146 is the ACT domain; that stretch reads TLSMVLDHMP…GVRKIEILGE (76 aa).

Belongs to the UPF0735 family.

This Thermoanaerobacter sp. (strain X514) protein is UPF0735 ACT domain-containing protein Teth514_2312.